We begin with the raw amino-acid sequence, 274 residues long: (R)-stereoselective amidase (274 aa).

Residues 1 to 234 (MKIELVQLAG…EVRHVVELDL (234 aa)) form the CN hydrolase domain. Glutamate 40 acts as the Proton acceptor in catalysis. The active-site Proton donor is lysine 108. Cysteine 140 acts as the Nucleophile in catalysis.

Monomer.

It catalyses the reaction (R)-piperazine-2-carboxamide + H2O = (R)-piperazine-2-carboxylate + NH4(+). It carries out the reaction beta-alaninamide + H2O = beta-alanine + NH4(+). Its activity is regulated as follows. Completely inhibited by p-chloromercuribenzoate, N-ethylmaleimide, MnSO(4), MnCl(2), CoCl(2), NiCl(2), CuSO(4), CuCl(2), ZnSO(4), ZnCl(2), AgNO(3), CdCl(2), HgCl(2) and PbCl(2). Partially inhibited by FeCl(3) and Fe(NH(4))(2)(SO(4))(2). Slightly enhanced by dithiothreitol. Unaffected by LiBr, H(2)BO(3), NaCl, MgSO(4), MgCl(2), AlCl(3), KCl, CaCl(2), CrCl(3), RbCl, Na(2)MoO(4), (NH(4))(6)Mo(7)O(24), CsCl and BaCl(2). Unaffected by the chelating agents o-phenanthroline, 8-hydroxyquinoline, enthylenediaminetetraacetic acid and alpha,alpha'-dipyridyl. Not inhibited by the carbonyl reagents hydroxylamine, phenylhydrazine, hydrazine, D,L-penicillamine and D-cycloserine. Not affected by the serine protease inhibitor phenylmethanesulfonyl fluoride, the serine/cysteine protease inhibitor leupeptine or the aspartic protease inhibitor pepstatin. Functionally, hydrolyzes (R)-piperazine-2-carboxamide and (R)-piperazine-2-tert-butylcarboxamide with strict R-stereoselectivity. Also active towards beta-alaninamide, piperidine-3-carboxmide, D-glutaminamide and slightly active towards L-glutaminamide and piperidine-4-carboxamide. In Pseudomonas sp, this protein is (R)-stereoselective amidase.